A 425-amino-acid polypeptide reads, in one-letter code: Ribosomal protein uS12 methylthiotransferase RimO (425 aa).

The region spanning 2–115 is the MTTase N-terminal domain; that stretch reads KNFTVITLGC…IIDYIKQFSK (114 aa). [4Fe-4S] cluster is bound by residues cysteine 11, cysteine 47, cysteine 78, cysteine 142, cysteine 146, and cysteine 149. The Radical SAM core domain maps to 128–357; sequence VEPPSYRYIK…MARQAVISLE (230 aa). Positions 360–425 constitute a TRAM domain; it reads RALIGKKYEA…YEYDVKGVIV (66 aa).

This sequence belongs to the methylthiotransferase family. RimO subfamily. Requires [4Fe-4S] cluster as cofactor.

The protein localises to the cytoplasm. The enzyme catalyses L-aspartate(89)-[ribosomal protein uS12]-hydrogen + (sulfur carrier)-SH + AH2 + 2 S-adenosyl-L-methionine = 3-methylsulfanyl-L-aspartate(89)-[ribosomal protein uS12]-hydrogen + (sulfur carrier)-H + 5'-deoxyadenosine + L-methionine + A + S-adenosyl-L-homocysteine + 2 H(+). Catalyzes the methylthiolation of an aspartic acid residue of ribosomal protein uS12. The sequence is that of Ribosomal protein uS12 methylthiotransferase RimO from Thermodesulfovibrio yellowstonii (strain ATCC 51303 / DSM 11347 / YP87).